A 252-amino-acid chain; its full sequence is Putative teichuronic acid biosynthesis glycosyltransferase TuaG (252 aa).

It belongs to the glycosyltransferase 2 family.

Its pathway is cell wall biogenesis; teichuronic acid biosynthesis. The protein is Putative teichuronic acid biosynthesis glycosyltransferase TuaG (tuaG) of Bacillus subtilis (strain 168).